A 156-amino-acid polypeptide reads, in one-letter code: Oxidized purine nucleoside triphosphate hydrolase (156 aa).

In terms of domain architecture, Nudix hydrolase spans 3–132 (TSKLLTLVLV…WFPLMLQKKR (130 aa)). Position 8 (Thr-8) interacts with 2-oxo-dATP. O(6)-methyl-dGMP-binding positions include Thr-8, Lys-23, Asn-33, and 35–38 (FGGK). Lys-23 lines the 8-oxo-dGTP pocket. 2-oxo-dATP contacts are provided by residues Asn-33 and 35–38 (FGGK). Positions 36, 52, 55, 56, and 100 each coordinate Mg(2+). The Nudix box signature appears at 37–58 (GKVQTGETIEQAARRELLEESG). Position 117-120 (117-120 (WADD)) interacts with 2-oxo-dATP. 117–120 (WADD) serves as a coordination point for O(6)-methyl-dGMP.

Belongs to the Nudix hydrolase family. Monomer. It depends on Mg(2+) as a cofactor.

It localises to the cytoplasm. It is found in the cytosol. The protein resides in the mitochondrion matrix. Its subcellular location is the nucleus. The enzyme catalyses 2-oxo-dATP + H2O = 2-oxo-dAMP + diphosphate + H(+). It carries out the reaction 2-oxo-ATP + H2O = 2-oxo-AMP + diphosphate + H(+). It catalyses the reaction 8-oxo-dGTP + H2O = 8-oxo-dGMP + diphosphate + H(+). The catalysed reaction is 8-oxo-dATP + H2O = 8-oxo-dAMP + diphosphate + H(+). The enzyme catalyses O(6)-methyl-dGTP + H2O = O(6)-methyl-dGMP + diphosphate + H(+). It carries out the reaction N(6)-methyl-dATP + H2O = N(6)-methyl-dAMP + diphosphate + H(+). It catalyses the reaction N(6)-methyl-ATP + H2O = N(6)-methyl-AMP + diphosphate + H(+). With respect to regulation, inhibited by TH588. Oxidized purine nucleoside triphosphate hydrolase which is a prominent sanitizer of the oxidized nucleotide pool. Catalyzes the hydrolysis of 2-oxo-dATP (2-hydroxy-dATP) into 2-oxo-dAMP. Also has a significant hydrolase activity toward 2-oxo-ATP, 8-oxo-dGTP and 8-oxo-dATP. Through the hydrolysis of oxidized purine nucleoside triphosphates, prevents their incorporation into DNA and the subsequent transversions A:T to C:G and G:C to T:A. Also catalyzes the hydrolysis of methylated purine nucleoside triphosphate preventing their integration into DNA. Through this antimutagenic activity protects cells from oxidative stress. This is Oxidized purine nucleoside triphosphate hydrolase (nudt1) from Danio rerio (Zebrafish).